The following is a 417-amino-acid chain: Gamma-glutamyl phosphate reductase (417 aa).

This sequence belongs to the gamma-glutamyl phosphate reductase family.

It is found in the cytoplasm. It carries out the reaction L-glutamate 5-semialdehyde + phosphate + NADP(+) = L-glutamyl 5-phosphate + NADPH + H(+). It participates in amino-acid biosynthesis; L-proline biosynthesis; L-glutamate 5-semialdehyde from L-glutamate: step 2/2. Catalyzes the NADPH-dependent reduction of L-glutamate 5-phosphate into L-glutamate 5-semialdehyde and phosphate. The product spontaneously undergoes cyclization to form 1-pyrroline-5-carboxylate. The chain is Gamma-glutamyl phosphate reductase from Clostridium novyi (strain NT).